The sequence spans 189 residues: UPF0301 protein Cgl3084/cg3414 (189 aa).

It belongs to the UPF0301 (AlgH) family.

This is UPF0301 protein Cgl3084/cg3414 from Corynebacterium glutamicum (strain ATCC 13032 / DSM 20300 / JCM 1318 / BCRC 11384 / CCUG 27702 / LMG 3730 / NBRC 12168 / NCIMB 10025 / NRRL B-2784 / 534).